The primary structure comprises 223 residues: Putative oxidoreductase MT1904 (223 aa).

4-28 (LVTGGDTDLGRTMAEGFRNDGHKVT) lines the NADP(+) pocket. Ser-128 provides a ligand contact to substrate.

The protein belongs to the short-chain dehydrogenases/reductases (SDR) family.

The polypeptide is Putative oxidoreductase MT1904 (Mycobacterium tuberculosis (strain CDC 1551 / Oshkosh)).